A 415-amino-acid polypeptide reads, in one-letter code: Serine hydroxymethyltransferase (415 aa).

(6S)-5,6,7,8-tetrahydrofolate-binding positions include Leu-117 and 121–123 (GHL). Lys-226 bears the N6-(pyridoxal phosphate)lysine mark. (6S)-5,6,7,8-tetrahydrofolate is bound by residues Glu-241 and 349-351 (SPF).

The protein belongs to the SHMT family. Homodimer. Requires pyridoxal 5'-phosphate as cofactor.

Its subcellular location is the cytoplasm. It catalyses the reaction (6R)-5,10-methylene-5,6,7,8-tetrahydrofolate + glycine + H2O = (6S)-5,6,7,8-tetrahydrofolate + L-serine. Its pathway is one-carbon metabolism; tetrahydrofolate interconversion. It participates in amino-acid biosynthesis; glycine biosynthesis; glycine from L-serine: step 1/1. Its function is as follows. Catalyzes the reversible interconversion of serine and glycine with tetrahydrofolate (THF) serving as the one-carbon carrier. This reaction serves as the major source of one-carbon groups required for the biosynthesis of purines, thymidylate, methionine, and other important biomolecules. Also exhibits THF-independent aldolase activity toward beta-hydroxyamino acids, producing glycine and aldehydes, via a retro-aldol mechanism. In Trichlorobacter lovleyi (strain ATCC BAA-1151 / DSM 17278 / SZ) (Geobacter lovleyi), this protein is Serine hydroxymethyltransferase.